The sequence spans 714 residues: Epithelial splicing regulatory protein 1 (714 aa).

RRM domains are found at residues 225-302 (TVIR…KATG), 326-406 (IIVR…KSTA), and 450-530 (DCVR…ACSA).

This sequence belongs to the ESRP family.

Its subcellular location is the nucleus. MRNA splicing factor that regulates the formation of epithelial cell-specific isoforms. Specifically regulates the expression of FGFR2-IIIb, an epithelial cell-specific isoform of fgfr2. Acts by directly binding specific sequences in mRNAs. Binds the GU-rich sequence motifs in the ISE/ISS-3, a cis-element regulatory region present in the mRNA of fgfr2. This Danio rerio (Zebrafish) protein is Epithelial splicing regulatory protein 1 (esrp1).